Here is a 344-residue protein sequence, read N- to C-terminus: Methionine import ATP-binding protein MetN 1 (344 aa).

Positions isoleucine 2 to isoleucine 241 constitute an ABC transporter domain. Glycine 38–serine 45 contributes to the ATP binding site.

Belongs to the ABC transporter superfamily. Methionine importer (TC 3.A.1.24) family. As to quaternary structure, the complex is composed of two ATP-binding proteins (MetN), two transmembrane proteins (MetI) and a solute-binding protein (MetQ).

It localises to the cell inner membrane. The enzyme catalyses L-methionine(out) + ATP + H2O = L-methionine(in) + ADP + phosphate + H(+). It catalyses the reaction D-methionine(out) + ATP + H2O = D-methionine(in) + ADP + phosphate + H(+). Part of the ABC transporter complex MetNIQ involved in methionine import. Responsible for energy coupling to the transport system. This is Methionine import ATP-binding protein MetN 1 from Burkholderia orbicola (strain AU 1054).